The sequence spans 212 residues: Leucyl/phenylalanyl-tRNA--protein transferase (212 aa).

Belongs to the L/F-transferase family.

It is found in the cytoplasm. It carries out the reaction N-terminal L-lysyl-[protein] + L-leucyl-tRNA(Leu) = N-terminal L-leucyl-L-lysyl-[protein] + tRNA(Leu) + H(+). The enzyme catalyses N-terminal L-arginyl-[protein] + L-leucyl-tRNA(Leu) = N-terminal L-leucyl-L-arginyl-[protein] + tRNA(Leu) + H(+). The catalysed reaction is L-phenylalanyl-tRNA(Phe) + an N-terminal L-alpha-aminoacyl-[protein] = an N-terminal L-phenylalanyl-L-alpha-aminoacyl-[protein] + tRNA(Phe). Functionally, functions in the N-end rule pathway of protein degradation where it conjugates Leu, Phe and, less efficiently, Met from aminoacyl-tRNAs to the N-termini of proteins containing an N-terminal arginine or lysine. This is Leucyl/phenylalanyl-tRNA--protein transferase from Paracoccus denitrificans (strain Pd 1222).